Here is a 391-residue protein sequence, read N- to C-terminus: Pyoverdine export membrane fusion protein PvdR (391 aa).

Positions 1–24 (MRRTRSTRRALLVAVCLSPLIALA) are cleaved as a signal peptide. A coiled-coil region spans residues 108–180 (IEMLKAQLAE…QASLRSDEAE (73 aa)). Residues 263–289 (LPVPPKPLDQSNQGGGSPTSGSGGQSG) form a disordered region. Residues 275–289 (QGGGSPTSGSGGQSG) are compositionally biased toward gly residues.

The protein belongs to the membrane fusion protein (MFP) (TC 8.A.1) family. Part of the tripartite efflux system PvdRT-OpmQ, which is composed of an inner membrane component with both ATPase and permease domains, PvdT, a periplasmic membrane fusion protein, PvdR, and an outer membrane component, OpmQ.

The protein localises to the periplasm. Part of the tripartite efflux system PvdRT-OpmQ required for the secretion into the extracellular milieu of the siderophore pyoverdine (PVD), which is involved in iron acquisition. This subunit is an adapter protein that stimulates the ATPase activity of PvdT and connects the inner and outer membrane components. The system is responsible for export of newly synthesized PVD after the final steps of biosynthesis have taken place in the periplasm. It is also responsible for recycling of PVD after internalization of ferri-PVD into the periplasm by the outer-membrane receptor FpvA and release of iron from PVD, thus making PVD available for new cycles of iron uptake. In addition, can expel unwanted metals complexed with PVD from the periplasm into the extracellular medium. Does not contribute to resistance to antibiotics belonging to the classes of tetracyclines, aminoglycosides, beta-lactams and macrolides, and chloramphenicol. This Pseudomonas aeruginosa (strain ATCC 15692 / DSM 22644 / CIP 104116 / JCM 14847 / LMG 12228 / 1C / PRS 101 / PAO1) protein is Pyoverdine export membrane fusion protein PvdR.